The sequence spans 504 residues: ATP synthase subunit alpha, chloroplastic (504 aa).

170 to 177 (GDRQTGKT) is an ATP binding site.

It belongs to the ATPase alpha/beta chains family. In terms of assembly, F-type ATPases have 2 components, CF(1) - the catalytic core - and CF(0) - the membrane proton channel. CF(1) has five subunits: alpha(3), beta(3), gamma(1), delta(1), epsilon(1). CF(0) has four main subunits: a, b, b' and c.

The protein localises to the plastid. The protein resides in the chloroplast thylakoid membrane. The enzyme catalyses ATP + H2O + 4 H(+)(in) = ADP + phosphate + 5 H(+)(out). Produces ATP from ADP in the presence of a proton gradient across the membrane. The alpha chain is a regulatory subunit. This chain is ATP synthase subunit alpha, chloroplastic, found in Cyanidium caldarium (Red alga).